Here is a 1171-residue protein sequence, read N- to C-terminus: APC-related protein 1 (1171 aa).

The segment at 1–54 (MSSSSSDENETTIHSSSNPGSSGIYSQLKAGSSKRPSVRHDVSDAEDDEEPYEG) is disordered. The required for interaction with bar-1 and hmp-2 stretch occupies residues 1–481 (MSSSSSDENE…LSLRATRASP (481 aa)). Over residues 15–26 (SSSNPGSSGIYS) the composition is skewed to low complexity. Residues 312 to 356 (NCLKVLANILSPDARFTTLVDSASGILKYVSQYLATNSSHLELRS) form an ARM repeat. Disordered regions lie at residues 587 to 617 (PVDD…NPGS), 662 to 699 (HPED…GTTV), 720 to 741 (RKTS…LEVE), 767 to 822 (EEMP…EMTT), 837 to 936 (PRSR…TMRI), and 995 to 1030 (SSGS…SSLP). The segment at 591–1171 (DLDIPTSTVM…NPKQMLVTIV (581 aa)) is required for interaction with pry-1. Composition is skewed to polar residues over residues 595–617 (PTST…NPGS) and 666–697 (NQMT…SDGT). Polar residues predominate over residues 788 to 799 (FSPSQKTTSSPA). The span at 857-874 (EPDRSSHSKNEEADRRDA) shows a compositional bias: basic and acidic residues. 2 stretches are compositionally biased toward polar residues: residues 890 to 913 (RGSS…SSED) and 1002 to 1028 (LQKA…SVSS).

Belongs to the adenomatous polyposis coli (APC) family. As to quaternary structure, interacts (via N-terminus) with bar-1 and hmp-2; the interaction with hmp-2 is relatively weak. Interacts (via C-terminus) with pry-1 (via N-terminus). Probably associates with bar-1, gsk-3, pry-1 in a complex.

The protein resides in the cell junction. It is found in the adherens junction. Its subcellular location is the cytoplasm. The protein localises to the nucleus. Its function is as follows. Has a role in endoderm cell specification and pharyngeal development. Required for the migration of epithelial cells, organization of the anterior seam cells and ceh-13 expression during embryo morphogenesis. Prevents hyperactivation of the Wnt signaling pathway during endoderm development, probably by preventing hmp-2 nuclear translocation. During larval development, apr-1 is required for expression of lin-39 in P3-8.p. Shown to negatively regulate Wnt signaling in vulval precursor cells. Has a role in cell division by establishing the polarity of the mother cell which forms the asymmetries of the daughter nuclei. Thought to regulate export of wrm-1 from the nucleus possibly as part of a complex involving pry-1. In Caenorhabditis briggsae, this protein is APC-related protein 1.